We begin with the raw amino-acid sequence, 307 residues long: tRNA dimethylallyltransferase (307 aa).

Residue 9-16 (GPTAVGKT) participates in ATP binding. 11 to 16 (TAVGKT) contacts substrate. An interaction with substrate tRNA region spans residues 34-37 (DSMQ).

This sequence belongs to the IPP transferase family. Monomer. Requires Mg(2+) as cofactor.

The enzyme catalyses adenosine(37) in tRNA + dimethylallyl diphosphate = N(6)-dimethylallyladenosine(37) in tRNA + diphosphate. Catalyzes the transfer of a dimethylallyl group onto the adenine at position 37 in tRNAs that read codons beginning with uridine, leading to the formation of N6-(dimethylallyl)adenosine (i(6)A). The polypeptide is tRNA dimethylallyltransferase (Levilactobacillus brevis (strain ATCC 367 / BCRC 12310 / CIP 105137 / JCM 1170 / LMG 11437 / NCIMB 947 / NCTC 947) (Lactobacillus brevis)).